A 408-amino-acid polypeptide reads, in one-letter code: Broad specificity amino-acid racemase (408 aa).

An N-terminal signal peptide occupies residues 1–21 (MHKKTLLATLILGLLAGQAVA). Cysteines 70 and 96 form a disulfide. K74 serves as the catalytic Proton acceptor. An N6-(pyridoxal phosphate)lysine modification is found at K74. A substrate-binding site is contributed by R173. Y300 serves as the catalytic Proton acceptor. Position 348 (M348) interacts with substrate.

This sequence belongs to the alanine racemase family. Bsr subfamily. As to quaternary structure, homodimer. It depends on pyridoxal 5'-phosphate as a cofactor.

Its subcellular location is the periplasm. The catalysed reaction is an L-alpha-amino acid = a D-alpha-amino acid. It carries out the reaction L-lysine = D-lysine. The enzyme catalyses L-arginine = D-arginine. It catalyses the reaction L-alanine = D-alanine. The catalysed reaction is L-serine = D-serine. It carries out the reaction L-methionine = D-methionine. The enzyme catalyses L-leucine = D-leucine. It catalyses the reaction L-cysteine = D-cysteine. The catalysed reaction is L-glutamine = D-glutamine. It carries out the reaction L-asparagine = D-asparagine. The enzyme catalyses L-histidine = D-histidine. Its function is as follows. Amino-acid racemase able to utilize a broad range of substrates. Reversibly racemizes ten of the 19 natural chiral amino acids known, including both non-beta-branched aliphatic amino acids (Ala, Leu, Met, Ser, Cys, Gln and Asn) and positively charged amino acids (His, Lys and Arg). Is not active on negatively charged (Glu and Asp) or aromatic (Tyr, Trp and Phe) amino acids and displays minimal activity towards beta-branched aliphatic (Ile, Val and Thr) substrates. Enables bacteria to produce and release extracellular non-canonical D-amino acids (NCDAAs) that regulate diverse cellular processes. In Aeromonas hydrophila subsp. hydrophila (strain ATCC 7966 / DSM 30187 / BCRC 13018 / CCUG 14551 / JCM 1027 / KCTC 2358 / NCIMB 9240 / NCTC 8049), this protein is Broad specificity amino-acid racemase.